The following is a 476-amino-acid chain: Sedoheptulokinase (476 aa).

This sequence belongs to the FGGY kinase family.

Its subcellular location is the cytoplasm. It catalyses the reaction sedoheptulose + ATP = D-sedoheptulose 7-phosphate + ADP + H(+). Its function is as follows. Acts as a modulator of macrophage activation through control of glucose metabolism. The protein is Sedoheptulokinase (Shpk) of Mus musculus (Mouse).